The sequence spans 119 residues: Protein TusC (119 aa).

This sequence belongs to the DsrF/TusC family. In terms of assembly, heterohexamer, formed by a dimer of trimers. The hexameric TusBCD complex contains 2 copies each of TusB, TusC and TusD. The TusBCD complex interacts with TusE.

It localises to the cytoplasm. Part of a sulfur-relay system required for 2-thiolation of 5-methylaminomethyl-2-thiouridine (mnm(5)s(2)U) at tRNA wobble positions. This is Protein TusC from Citrobacter koseri (strain ATCC BAA-895 / CDC 4225-83 / SGSC4696).